The chain runs to 179 residues: GTP-dependent dephospho-CoA kinase (179 aa).

Positions 50, 51, 52, 69, 71, and 126 each coordinate GTP.

It belongs to the GTP-dependent DPCK family.

The catalysed reaction is 3'-dephospho-CoA + GTP = GDP + CoA + H(+). It participates in cofactor biosynthesis; coenzyme A biosynthesis. Functionally, catalyzes the GTP-dependent phosphorylation of the 3'-hydroxyl group of dephosphocoenzyme A to form coenzyme A (CoA). In Pyrococcus horikoshii (strain ATCC 700860 / DSM 12428 / JCM 9974 / NBRC 100139 / OT-3), this protein is GTP-dependent dephospho-CoA kinase.